The following is a 100-amino-acid chain: Small ribosomal subunit protein uS14 (100 aa).

Belongs to the universal ribosomal protein uS14 family. Part of the 30S ribosomal subunit. Contacts proteins S3 and S10.

Its function is as follows. Binds 16S rRNA, required for the assembly of 30S particles and may also be responsible for determining the conformation of the 16S rRNA at the A site. This chain is Small ribosomal subunit protein uS14, found in Synechococcus sp. (strain CC9902).